A 273-amino-acid polypeptide reads, in one-letter code: Formamidopyrimidine-DNA glycosylase (273 aa).

Residue Pro-2 is the Schiff-base intermediate with DNA of the active site. Glu-3 functions as the Proton donor in the catalytic mechanism. Lys-60 functions as the Proton donor; for beta-elimination activity in the catalytic mechanism. DNA is bound by residues His-94, Arg-113, and Arg-154. Residues 239 to 273 form an FPG-type zinc finger; it reads NAYDREGQPCPRCGATIIKTVVAQRGTHYCPECQR. Residue Arg-263 is the Proton donor; for delta-elimination activity of the active site.

The protein belongs to the FPG family. Monomer. Zn(2+) serves as cofactor.

The catalysed reaction is Hydrolysis of DNA containing ring-opened 7-methylguanine residues, releasing 2,6-diamino-4-hydroxy-5-(N-methyl)formamidopyrimidine.. It catalyses the reaction 2'-deoxyribonucleotide-(2'-deoxyribose 5'-phosphate)-2'-deoxyribonucleotide-DNA = a 3'-end 2'-deoxyribonucleotide-(2,3-dehydro-2,3-deoxyribose 5'-phosphate)-DNA + a 5'-end 5'-phospho-2'-deoxyribonucleoside-DNA + H(+). Involved in base excision repair of DNA damaged by oxidation or by mutagenic agents. Acts as a DNA glycosylase that recognizes and removes damaged bases. Has a preference for oxidized purines, such as 7,8-dihydro-8-oxoguanine (8-oxoG). Has AP (apurinic/apyrimidinic) lyase activity and introduces nicks in the DNA strand. Cleaves the DNA backbone by beta-delta elimination to generate a single-strand break at the site of the removed base with both 3'- and 5'-phosphates. The sequence is that of Formamidopyrimidine-DNA glycosylase from Roseiflexus sp. (strain RS-1).